The chain runs to 182 residues: Adenylate kinase (182 aa).

12-17 serves as a coordination point for ATP; that stretch reads GAGKGT. The NMP stretch occupies residues 32–61; sequence STGDLLREEVSGGTDLGKKAELIMNKGELV. AMP is bound by residues T33, R38, 59–61, 85–88, and Q92; these read ELV and GFPR. The segment at 126 to 132 is LID; sequence GRGRKDD. R127 provides a ligand contact to ATP. Positions 129 and 140 each coordinate AMP. G168 lines the ATP pocket.

Belongs to the adenylate kinase family. As to quaternary structure, monomer.

The protein resides in the cytoplasm. It carries out the reaction AMP + ATP = 2 ADP. It participates in purine metabolism; AMP biosynthesis via salvage pathway; AMP from ADP: step 1/1. Functionally, catalyzes the reversible transfer of the terminal phosphate group between ATP and AMP. Plays an important role in cellular energy homeostasis and in adenine nucleotide metabolism. The polypeptide is Adenylate kinase (Prochlorococcus marinus (strain SARG / CCMP1375 / SS120)).